The following is a 101-amino-acid chain: Small ribosomal subunit protein uS14 (101 aa).

The tract at residues 1-21 (MAKTSSVEKNNRRRKLADQYG) is disordered.

It belongs to the universal ribosomal protein uS14 family. In terms of assembly, part of the 30S ribosomal subunit. Contacts proteins S3 and S10.

Binds 16S rRNA, required for the assembly of 30S particles and may also be responsible for determining the conformation of the 16S rRNA at the A site. The protein is Small ribosomal subunit protein uS14 of Mesorhizobium japonicum (strain LMG 29417 / CECT 9101 / MAFF 303099) (Mesorhizobium loti (strain MAFF 303099)).